We begin with the raw amino-acid sequence, 132 residues long: SH2 domain-containing protein 1B2 (132 aa).

The SH2 domain maps to 5-101 (YYHGCLTKRE…GMVVHLSNPI (97 aa)).

As to quaternary structure, interacts with SLAMF1 (phosphorylated). Interacts with CD244. Interacts with Src kinases HCK, LYN, FYN, FGR and LCK (via kinase domains). Expressed in spleen. Expressed in macrophages, CD8(+) T-Cells and NK cells. Conflictingly found only in NK cells.

The protein localises to the cytoplasm. In terms of biological role, cytoplasmic adapter regulating receptors of the signaling lymphocytic activation molecule (SLAM) family. In SLAM signaling may cooperate with Sh2d1a/SAP. Plays a role in regulation of effector functions of natural killer (NK) cells by controlling signal transduction through Cd244/2b4. However, conflicting results are reported which may reflect the use of different strain backgrounds. Proposed to act as an inhibitor of Cd244-mediated NK cell function including cytotoxicity and IFN-gamma production, the latter found also by triggering Klra4 and Klrk1 next to Cd244. Seems to positively regulate Cd244- and Cd84-dependent NK cell functions implicating Cd244-mediated phosphorylation of Vav1. In Mus musculus (Mouse), this protein is SH2 domain-containing protein 1B2 (Sh2d1b2).